A 277-amino-acid polypeptide reads, in one-letter code: Probable xyloglucan endotransglucosylase/hydrolase protein 11 (277 aa).

Positions 1-24 (MRGSDQKILLMVMVVVAVVAAAQG) are cleaved as a signal peptide. The GH16 domain maps to 32-209 (VTWGNNYYQT…PKQMPYIAKF (178 aa)). N-linked (GlcNAc...) asparagine glycosylation is present at Asn-50. Glu-107 functions as the Nucleophile in the catalytic mechanism. Xyloglucan contacts are provided by residues 123-125 (NTN) and 133-135 (GKD). Asn-194 is a glycosylation site (N-linked (GlcNAc...) asparagine). 2 disulfide bridges follow: Cys-217-Cys-227 and Cys-260-Cys-273. A xyloglucan-binding site is contributed by Arg-265.

Belongs to the glycosyl hydrolase 16 family. XTH group 1 subfamily. Post-translationally, contains at least one intrachain disulfide bond essential for its enzymatic activity.

Its subcellular location is the secreted. The protein resides in the cell wall. The protein localises to the extracellular space. It is found in the apoplast. It catalyses the reaction breaks a beta-(1-&gt;4) bond in the backbone of a xyloglucan and transfers the xyloglucanyl segment on to O-4 of the non-reducing terminal glucose residue of an acceptor, which can be a xyloglucan or an oligosaccharide of xyloglucan.. Functionally, may catalyze xyloglucan endohydrolysis (XEH) and/or endotransglycosylation (XET). Cleaves and religates xyloglucan polymers, an essential constituent of the primary cell wall, and thereby participates in cell wall construction of growing tissues. The sequence is that of Probable xyloglucan endotransglucosylase/hydrolase protein 11 (XTH11) from Arabidopsis thaliana (Mouse-ear cress).